The following is a 101-amino-acid chain: Enhancer of yellow 2 transcription factor (101 aa).

This sequence belongs to the ENY2 family. Component of the nuclear pore complex (NPC)-associated TREX-2/AMEX complex (anchoring and mRNA export complex), composed of e(y)2, xmas and PCID2. Within the TREX-2/ AMEX complex, interactions with xmas is required for localization to the nuclear periphery. Component of the SAGA transcription coactivator-HAT complexes, at least composed of Ada2b, e(y)2, Pcaf/Gcn5, Taf10 and Nipped-A/Trrap. Within the SAGA complex, e(y)2, Sgf11, and not/nonstop form an additional subcomplex of SAGA called the DUB module (deubiquitination module). Component of the THO complex, composed of at least e(y)2, HPR1, THO2, THOC5, THOC6 and THOC7. Interacts with Taf9. Interacts with su(Hw) (via zinc fingers). Interacts with the nuclear pore complex (NPC). Interaction between the TREX-2/AMEX complex and the ORC complex is required for ORC localization to mRNPs, and consequently mRNA export. Within the TREX-2/AMEX-ORC complex, interacts with Orc6 and (via N-terminus or C-terminus) with Orc3. Interacts with the zinc finger protein CG9890. As to expression, ubiquitous.

It is found in the nucleus. The protein resides in the nucleoplasm. Its subcellular location is the cytoplasm. It localises to the nucleus membrane. Its function is as follows. Involved in mRNA export coupled transcription activation by association with both the TREX-2/AMEX and the SAGA complexes. The SAGA complex is a multiprotein complex that activates transcription by remodeling chromatin and mediating histone acetylation and deubiquitination. Within the SAGA complex, participates in a subcomplex that specifically deubiquitinates histone H2B. The SAGA complex is recruited to specific gene promoters by activators, where it is required for transcription. Required for nuclear receptor-mediated transactivation. Involved in transcription elongation by recruiting the THO complex onto nascent mRNA. The TREX-2/AMEX complex functions in docking export-competent ribonucleoprotein particles (mRNPs) to the nuclear entrance of the nuclear pore complex (nuclear basket). TREX-2/AMEX participates in mRNA export and accurate chromatin positioning in the nucleus by tethering genes to the nuclear periphery. Recruited to the su(Hw) insulators via its interaction with su(Hw) and participates in the barrier activity of such insulators. In contrast, it does not participate in the enhancer-blocking activity of the su(Hw) insulators. This chain is Enhancer of yellow 2 transcription factor, found in Drosophila melanogaster (Fruit fly).